The chain runs to 326 residues: Cyclin-dependent kinase 6 (326 aa).

N-acetylmethionine is present on Met-1. A phosphotyrosine mark is found at Tyr-13 and Tyr-24. The Protein kinase domain maps to 13–300; sequence YECVAEIGEG…AYGALNHPYF (288 aa). ATP contacts are provided by residues 19 to 27 and Lys-43; that span reads IGEGAYGKV. Phosphothreonine occurs at positions 49 and 70. Catalysis depends on Asp-145, which acts as the Proton acceptor. The residue at position 177 (Thr-177) is a Phosphothreonine. N6-acetyllysine is present on Lys-264. Ser-319 carries the phosphoserine modification. Phosphothreonine is present on Thr-325.

It belongs to the protein kinase superfamily. CMGC Ser/Thr protein kinase family. CDC2/CDKX subfamily. As to quaternary structure, interaction with D-type G1 cyclins. Cyclin binding promotes enzyme activation by phosphorylation at Thr-177. Binds to RUNX1, CDKN2D, FBXO7 and CDKN2C/p18-INK4c. Forms a cytoplasmic complex with Hsp90/HSP90AB1 and CDC37. FBXO7-binding promotes D-type cyclin binding. Post-translationally, thr-177 phosphorylation and Tyr-24 dephosphorylation promotes kinase activity. In terms of tissue distribution, expressed in subgranular zone (SGZ) of the hippocampal dentate gyrus (DG) and the subventricular zone (SVZ) of the lateral ventricles whose neural precursor cells (NPC) give rise to dentate granule neurons and olfactory bulb (OB) interneurons, respectively. Expressed in the neuroepithelium of the cerebral cortex of the developing brain.

The protein resides in the cytoplasm. It is found in the nucleus. It localises to the cell projection. The protein localises to the ruffle. Its subcellular location is the cytoskeleton. The protein resides in the microtubule organizing center. It is found in the centrosome. The catalysed reaction is L-seryl-[protein] + ATP = O-phospho-L-seryl-[protein] + ADP + H(+). It catalyses the reaction L-threonyl-[protein] + ATP = O-phospho-L-threonyl-[protein] + ADP + H(+). With respect to regulation, activated by Thr-177 phosphorylation and Tyr-24 dephosphorylation. Rapidly down-regulated prior to cell differentiation (e.g. erythroid and osteoblast). Its function is as follows. Serine/threonine-protein kinase involved in the control of the cell cycle and differentiation; promotes G1/S transition. Phosphorylates pRB/RB1 and NPM1. Interacts with D-type G1 cyclins during interphase at G1 to form a pRB/RB1 kinase and controls the entrance into the cell cycle. Involved in initiation and maintenance of cell cycle exit during cell differentiation; prevents cell proliferation and negatively regulates cell differentiation, but is required for the proliferation of specific cell types (e.g. erythroid and hematopoietic cells). Essential for cell proliferation within the dentate gyrus of the hippocampus and the subventricular zone of the lateral ventricles. Required during thymocyte development. Promotes the production of newborn neurons, probably by modulating G1 length. Promotes, at least in astrocytes, changes in patterns of gene expression, changes in the actin cytoskeleton including loss of stress fibers, and enhanced motility during cell differentiation. Prevents myeloid differentiation by interfering with RUNX1 and reducing its transcription transactivation activity, but promotes proliferation of normal myeloid progenitors. Delays senescence. Promotes the proliferation of beta-cells in pancreatic islets of Langerhans. May play a role in the centrosome organization during the cell cycle phases. The polypeptide is Cyclin-dependent kinase 6 (Cdk6) (Mus musculus (Mouse)).